Reading from the N-terminus, the 537-residue chain is Actin-histidine N-methyltransferase (537 aa).

The segment covering 1 to 12 (MGKNTKRNKKTK) has biased composition (basic residues). The segment at 1–50 (MGKNTKRNKKTKQQQQQPQQNGVTASASGTAVEDFEDQQAASSLPSLNGK) is disordered. S-adenosyl-L-methionine-binding positions include Arg114, 143–145 (YQL), Arg299, 325–329 (DMANH), and 375–377 (NGF). In terms of domain architecture, SET spans 133–364 (EGLEIAIFPG…TGEQFFIYYG (232 aa)).

The protein belongs to the class V-like SAM-binding methyltransferase superfamily. SETD3 actin-histidine methyltransferase family.

It is found in the cytoplasm. The protein resides in the nucleus. The catalysed reaction is L-histidyl-[protein] + S-adenosyl-L-methionine = N(tele)-methyl-L-histidyl-[protein] + S-adenosyl-L-homocysteine + H(+). Its function is as follows. Protein-histidine N-methyltransferase that specifically mediates 3-methylhistidine (tele-methylhistidine) methylation of actin at 'His-74'. The protein is Actin-histidine N-methyltransferase of Drosophila melanogaster (Fruit fly).